The primary structure comprises 133 residues: Ribonuclease P protein component (133 aa).

Belongs to the RnpA family. In terms of assembly, consists of a catalytic RNA component (M1 or rnpB) and a protein subunit.

The catalysed reaction is Endonucleolytic cleavage of RNA, removing 5'-extranucleotides from tRNA precursor.. RNaseP catalyzes the removal of the 5'-leader sequence from pre-tRNA to produce the mature 5'-terminus. It can also cleave other RNA substrates such as 4.5S RNA. The protein component plays an auxiliary but essential role in vivo by binding to the 5'-leader sequence and broadening the substrate specificity of the ribozyme. This is Ribonuclease P protein component from Paramagnetospirillum magneticum (strain ATCC 700264 / AMB-1) (Magnetospirillum magneticum).